Consider the following 197-residue polypeptide: RNA pyrophosphohydrolase (197 aa).

The 144-residue stretch at 6–149 (GYRPNVGIVI…KRDVYRKAMK (144 aa)) folds into the Nudix hydrolase domain. The Nudix box motif lies at 38–59 (GGINDGETPEQAMYRELYEEVG). A disordered region spans residues 165–197 (LSTNNNDEKKANYSAKKPYSPYRNQDKKRKTRV).

It belongs to the Nudix hydrolase family. RppH subfamily. A divalent metal cation serves as cofactor.

Functionally, accelerates the degradation of transcripts by removing pyrophosphate from the 5'-end of triphosphorylated RNA, leading to a more labile monophosphorylated state that can stimulate subsequent ribonuclease cleavage. This chain is RNA pyrophosphohydrolase, found in Mannheimia succiniciproducens (strain KCTC 0769BP / MBEL55E).